A 231-amino-acid polypeptide reads, in one-letter code: Cytolethal distending toxin subunit A (231 aa).

Positions 1 to 15 are cleaved as a signal peptide; it reads MRLLFFLLITLLFAA. A lipid anchor (N-palmitoyl cysteine) is attached at C16. A lipid anchor (S-diacylglycerol cysteine) is attached at C16. The segment at 20–51 is disordered; that stretch reads PKVHQPKHSSKTEKDLGIGLSPTPPPNERIPG. The segment at 99–110 is mediates binding to target cells; that stretch reads WALKPRNWVWGY. Residues 130 to 217 form the Ricin B-type lectin domain; sequence SNGQVIIKNM…SSNLDQQWYI (88 aa).

As to quaternary structure, heterotrimer of 3 subunits, CdtA, CdtB and CdtC.

It is found in the cell outer membrane. CDTs are cytotoxins which induce cell distension, growth arrest in G2/M phase, nucleus swelling, and chromatin fragmentation in HeLa cells. In Helicobacter hepaticus (strain ATCC 51449 / 3B1), this protein is Cytolethal distending toxin subunit A (cdtA).